We begin with the raw amino-acid sequence, 57 residues long: Peptide BmKa1 (57 aa).

The signal sequence occupies residues 1-22 (MKPRVFFLLFLLVAAMIETGES). Composition is skewed to acidic residues over residues 20–29 (GESEENEEGS) and 45–57 (VDNE…GDSD). Residues 20-57 (GESEENEEGSNESGKSTEAKNTDASVDNEDSDIDGDSD) are disordered.

Belongs to the non-disulfide-bridged peptide (NDBP) superfamily. Expressed by the venom gland.

It localises to the secreted. This is Peptide BmKa1 from Olivierus martensii (Manchurian scorpion).